We begin with the raw amino-acid sequence, 546 residues long: Cation/calcium exchanger 5 (546 aa).

13 consecutive transmembrane segments (helical) span residues 13–33 (ALCL…TTIP), 88–108 (NLFF…YILI), 134–154 (AVTL…VAAL), 163–183 (FGAI…FVAI), 194–214 (SFVR…YVYL), 218–238 (IFVW…GFVF), 323–343 (SANI…FVQL), 356–376 (LPLW…HFTV), 388–408 (VIVV…GELL), 423–445 (ALLG…DVAV), 455–475 (MAGC…SALV), 492–512 (VGIV…LLVI), and 522–542 (FWGI…LIIA).

It belongs to the Ca(2+):cation antiporter (CaCA) (TC 2.A.19) family. Cation/calcium exchanger (CCX) subfamily.

The protein localises to the cell membrane. Membrane-localized H(+)-dependent K(+) and Na(+) transporter. The polypeptide is Cation/calcium exchanger 5 (CCX5) (Arabidopsis thaliana (Mouse-ear cress)).